Consider the following 382-residue polypeptide: Mannitol-1-phosphate 5-dehydrogenase (382 aa).

An NAD(+)-binding site is contributed by 3 to 14; it reads ALHFGAGNIGRG. The residue at position 269 (K269) is an N6-acetyllysine.

It belongs to the mannitol dehydrogenase family.

The catalysed reaction is D-mannitol 1-phosphate + NAD(+) = beta-D-fructose 6-phosphate + NADH + H(+). In Escherichia coli O81 (strain ED1a), this protein is Mannitol-1-phosphate 5-dehydrogenase.